The sequence spans 955 residues: Beta-agarase B (955 aa).

It belongs to the glycosyl hydrolase 50 family.

It carries out the reaction Hydrolysis of (1-&gt;4)-beta-D-galactosidic linkages in agarose, giving the tetramer as the predominant product.. Functionally, hydrolyzes agarose to yield predominantly neoagarotetraose and neoagarohexaose. The protein is Beta-agarase B (agaB) of Vibrio sp. (strain JT0107).